We begin with the raw amino-acid sequence, 1331 residues long: Disease resistance protein RUN1 (1331 aa).

A disordered region spans residues 1–20; the sequence is MASTSSSRASSSSSSSSTPS. In terms of domain architecture, TIR spans 25–190; the sequence is ITYDVFLSFR…EITDSIFRRL (166 aa). Residues 34–39 and Gly66 contribute to the NAD(+) site; that span reads RGEDTR. The active site involves Glu100. Residues 206–434 form the NB-ARC domain; it reads SHVKEMIWRL…REPEAEILSV (229 aa). 20 LRR repeats span residues 429–452, 480–509, 540–565, 616–638, 648–673, 684–708, 709–732, 734–756, 757–779, 781–803, 804–826, 828–850, 851–873, 875–897, 898–920, 922–944, 945–967, 969–991, 992–1014, and 1017–1040; these read AEILSVLKRSYDGLGRTEKSIFLD, IKNLNDKCLITLQYNRIRMHDLIQQMGWEI, IKRVETISLDLSKLKRVCSNSNAFAK, SYELRYLRWDGYPLDFLPSNFDG, CSNIKQLRLGNKDLEMLKVIDLSYSR, MPNLERLFLRGCVSLIDIHPSVGNM, KKLTTLSLKSCKKLKNLPDSIGDL, SLEILDLAYCSKFEKFPEKGGNM, KSLTELDLQNTAIKDLPDSIGDL, SLKYLDLSDCSKFEKFPEKGGNM, KSLRELDLRNTAIKDLPDSIRDL, SLERLYLSYCSKFEKFPEKGGNM, KSLMELDLQNTAIKDLPDSIGDL, SLKYLDLSNCSKFEKFPEKGGNM, KSLTELFLENTAIKDLPDSIGDL, SLVSLNLSDCSKFEKFPEKGGNM, KSLNWLYLNNTAIKDLPDSIGDL, SLMRLYLSNSSKFEKLPEKVGNM, KSLELLDLRNTAIKDLPDSIGDL, and LEKLSLSNCPKFEVLPLSLKAIDA. A Nuclear localization signal motif is present at residues 1287 to 1291; it reads RKRRR.

It belongs to the disease resistance TIR-NB-LRR family.

The protein localises to the nucleus. It localises to the cytoplasm. The catalysed reaction is NAD(+) + H2O = ADP-D-ribose + nicotinamide + H(+). It catalyses the reaction NADP(+) + H2O = ADP-D-ribose 2'-phosphate + nicotinamide + H(+). Its function is as follows. Disease resistance (R) protein that confers resistance to multiple powdery and downy mildew by promoting cell death. Acts as a NAD(+) hydrolase (NADase): in response to activation, catalyzes cleavage of NAD(+) into ADP-D-ribose (ADPR) and nicotinamide; NAD(+) cleavage triggering a defense system that promotes cell death. Also able to hydrolyze NADP(+), but not other NAD(+)-related molecules. This Vitis rotundifolia (Muscadine grape) protein is Disease resistance protein RUN1.